The primary structure comprises 103 residues: Pilin (103 aa).

A signal peptide spans methionine 1–alanine 30. Basic and acidic residues predominate over residues histidine 61–aspartate 76. Residues histidine 61–alanine 103 are disordered. Over residues alanine 92–alanine 103 the composition is skewed to pro residues.

Belongs to the mycobacterial pilin family. In terms of assembly, forms a homomer composed of subunits assembled in a large structure.

It localises to the fimbrium. Its function is as follows. Structural subunit of pili, which are thin, flexible, coiled-coil, aggregative fibers. Mediates adhesion to the extracellular matrix, an event that would facilitate direct interaction with the host epithelium during infection in the lung or other tissues. In Mycobacterium bovis (strain ATCC BAA-935 / AF2122/97), this protein is Pilin (mtp).